Here is a 182-residue protein sequence, read N- to C-terminus: Large ribosomal subunit protein uL6 (182 aa).

It belongs to the universal ribosomal protein uL6 family. As to quaternary structure, part of the 50S ribosomal subunit.

This protein binds to the 23S rRNA, and is important in its secondary structure. It is located near the subunit interface in the base of the L7/L12 stalk, and near the tRNA binding site of the peptidyltransferase center. This chain is Large ribosomal subunit protein uL6, found in Aeropyrum pernix (strain ATCC 700893 / DSM 11879 / JCM 9820 / NBRC 100138 / K1).